A 348-amino-acid polypeptide reads, in one-letter code: Phosphoribosylformylglycinamidine cyclo-ligase (348 aa).

This sequence belongs to the AIR synthase family.

It localises to the cytoplasm. The enzyme catalyses 2-formamido-N(1)-(5-O-phospho-beta-D-ribosyl)acetamidine + ATP = 5-amino-1-(5-phospho-beta-D-ribosyl)imidazole + ADP + phosphate + H(+). Its pathway is purine metabolism; IMP biosynthesis via de novo pathway; 5-amino-1-(5-phospho-D-ribosyl)imidazole from N(2)-formyl-N(1)-(5-phospho-D-ribosyl)glycinamide: step 2/2. This is Phosphoribosylformylglycinamidine cyclo-ligase from Ruegeria pomeroyi (strain ATCC 700808 / DSM 15171 / DSS-3) (Silicibacter pomeroyi).